The following is a 155-amino-acid chain: UPF0060 membrane protein MA_3936 (155 aa).

Transmembrane regions (helical) follow at residues 8–28 (LCPFFLAALFEIRGGYLICLW), 35–55 (AVFGPLGRLMLAVCGIIPTFQ), and 62–82 (VYAAHGGIFIVFSLIWDLFVD).

Belongs to the UPF0060 family.

Its subcellular location is the cell membrane. This is UPF0060 membrane protein MA_3936 from Methanosarcina acetivorans (strain ATCC 35395 / DSM 2834 / JCM 12185 / C2A).